The chain runs to 490 residues: MSDRGRTLMVQGTTSDAGKSTLVTALCRWLARRGVAVVPFKPQNMALNSAVTADGGEIGRAQAVQAQACRLAPHTDMNPVLLKPNTDIGAQVIIHGRAVTSMDAAAYHDYKRVAMEAVLASHGRLAAAYRVVMVEGAGSPAEINLRANDIANMGFAEAVDCPVILVADIDRGGVFAHLVGTLELLSDSERERVKGFVINRFRGDIALLQPGLDWLEARTGKPVLGVLPYVSDLHLEAEDAIDTRQAAKVGPRLKVVVPVLPRISNHTDFDPLRLHPQVELSFVGPGQALPSADLIVLPGSKSVRADLAALRERGWDEAILRHLRYGGRLLGICGGLQMLGERLHDPLGLEGAAGSSAGLGLLALETTLEADKQLRNVQGRLSLEDAPLSGYEIHAGVTRGEALARPAVVLDDGRADGARSVDGNVMGTYLHGLFESTAACSALLRWAGLREVQAVDYQALRERDIERLADLVERNLDTGRLLALCGEPHA.

The GATase cobBQ-type domain maps to 252 to 439 (RLKVVVPVLP…LHGLFESTAA (188 aa)). Residue cysteine 333 is the Nucleophile of the active site. Residue histidine 431 is part of the active site.

Belongs to the CobB/CobQ family. CobQ subfamily.

It participates in cofactor biosynthesis; adenosylcobalamin biosynthesis. Functionally, catalyzes amidations at positions B, D, E, and G on adenosylcobyrinic A,C-diamide. NH(2) groups are provided by glutamine, and one molecule of ATP is hydrogenolyzed for each amidation. This is Cobyric acid synthase from Pseudomonas aeruginosa (strain UCBPP-PA14).